A 409-amino-acid polypeptide reads, in one-letter code: MATAASASASASPAAAFGAKTRRPGPSPSPSPSPASAFARPSPRASAAGRLHASLHLGGASATGSSIVSNASGIHLAAPVLAPLAVPKMTGAVGAHKNVLLFHCEEMRELAEQVVARNDDIELRSISWRTFADGFPNLFISNAHTIRGQHVAFLASFSSPSVIFEQLSIIYALPKLFISSFTLILPFFPTGTSERMEDEGDVATAFTLARILSNIPISRGGPSSLVIFDIHALQERFYFGDSVLPCFESGIPLLKSRLQELPDSDNITIAFPDDGAWKRFYKQLQHFPMVVCNKVREGEQRIVRIKEGDPRGRHVVIVDDLVQSGGTLIECQKVLAEHGAAKVSAYVTHGIFPNKSWEKFQPDNGEGPGHGLSHFWITDSCPLTVNAVKDRQPFEILSLAGPIASALQI.

Low complexity-rich tracts occupy residues 1–16 and 34–43; these read MATAASASASASPAAA and PASAFARPSP. The tract at residues 1–43 is disordered; sequence MATAASASASASPAAAFGAKTRRPGPSPSPSPSPASAFARPSP. Residues 1–44 constitute a chloroplast transit peptide; the sequence is MATAASASASASPAAAFGAKTRRPGPSPSPSPSPASAFARPSPR. Residues aspartate 229 and histidine 231 each coordinate Mg(2+). Residues 312 to 327 form a binding of phosphoribosylpyrophosphate region; sequence GRHVVIVDDLVQSGGT.

This sequence belongs to the ribose-phosphate pyrophosphokinase family. The cofactor is Mg(2+).

It is found in the plastid. The protein resides in the chloroplast. It catalyses the reaction D-ribose 5-phosphate + ATP = 5-phospho-alpha-D-ribose 1-diphosphate + AMP + H(+). This is Ribose-phosphate pyrophosphokinase 3, chloroplastic from Oryza sativa subsp. japonica (Rice).